A 484-amino-acid polypeptide reads, in one-letter code: Cysteine--tRNA ligase (484 aa).

Cys27 is a binding site for Zn(2+). The 'HIGH' region motif lies at 29–39; it reads PTTYNYIHLGN. 3 residues coordinate Zn(2+): Cys207, His232, and Glu236. The short motif at 264 to 268 is the 'KMSKS' region element; sequence KMSKS. Lys267 contacts ATP.

Belongs to the class-I aminoacyl-tRNA synthetase family. Monomer. Requires Zn(2+) as cofactor.

It localises to the cytoplasm. It catalyses the reaction tRNA(Cys) + L-cysteine + ATP = L-cysteinyl-tRNA(Cys) + AMP + diphosphate. This is Cysteine--tRNA ligase from Pelotomaculum thermopropionicum (strain DSM 13744 / JCM 10971 / SI).